Reading from the N-terminus, the 562-residue chain is Glucan 1,3-beta-glucosidase 2 (562 aa).

Residues 1–22 (MPLKSFFFSAFLVLCLSKFTQG) form the signal peptide. Residues Asn50, Asn77, Asn86, Asn90, Asn106, Asn157, and Asn220 are each glycosylated (N-linked (GlcNAc...) asparagine). Glu254 serves as the catalytic Proton donor. N-linked (GlcNAc...) asparagine glycans are attached at residues Asn281, Asn285, Asn310, Asn317, and Asn322. The active-site Nucleophile is the His334. Asn401, Asn480, and Asn539 each carry an N-linked (GlcNAc...) asparagine glycan.

It belongs to the glycosyl hydrolase 5 (cellulase A) family.

It is found in the cell membrane. It catalyses the reaction Successive hydrolysis of beta-D-glucose units from the non-reducing ends of (1-&gt;3)-beta-D-glucans, releasing alpha-glucose.. This is Glucan 1,3-beta-glucosidase 2 (EXG2) from Saccharomyces cerevisiae (strain ATCC 204508 / S288c) (Baker's yeast).